The following is a 366-amino-acid chain: MSMNSFGHLFRVTTWGESHGTALGATVDGCPPGVAIDAGKIQHWLDKRKPGQNKYTTQRREADEVKILSGTFEGVTTGTPVQLMIENTDQRSKDYGDIKDKFRPGHADITYFQKYGVRDYRGGGRSSARETAARVAAGGLAREAIKSIAPGIDIKGYMTRMGAHEIDRSRFDWDQIDANPFWTPDAQAADEWASYLDGLRKSGSSVGAVIEVVARGVPAGLGAPIYAKLDTDLAAAMMSINAVKGVEIGEGMSAAMLTGELNADEISMGRDGPQYSSNHAGGILGGISTGQDIVVRFAVKPTSSILTTRKTITKSGEDTEIITKGRHDPCVGIRAVPVGEAMMACVLLDHLLLHRGQVGQNQGHIG.

R48 contacts NADP(+). FMN is bound by residues R125 to S127, N241 to A242, G285, K300 to S304, and R326.

This sequence belongs to the chorismate synthase family. Homotetramer. FMNH2 is required as a cofactor.

The enzyme catalyses 5-O-(1-carboxyvinyl)-3-phosphoshikimate = chorismate + phosphate. It functions in the pathway metabolic intermediate biosynthesis; chorismate biosynthesis; chorismate from D-erythrose 4-phosphate and phosphoenolpyruvate: step 7/7. Catalyzes the anti-1,4-elimination of the C-3 phosphate and the C-6 proR hydrogen from 5-enolpyruvylshikimate-3-phosphate (EPSP) to yield chorismate, which is the branch point compound that serves as the starting substrate for the three terminal pathways of aromatic amino acid biosynthesis. This reaction introduces a second double bond into the aromatic ring system. This chain is Chorismate synthase, found in Roseobacter denitrificans (strain ATCC 33942 / OCh 114) (Erythrobacter sp. (strain OCh 114)).